The sequence spans 173 residues: Crossover junction endodeoxyribonuclease RuvC (173 aa).

Active-site residues include D8, E67, and D139. The Mg(2+) site is built by D8, E67, and D139.

This sequence belongs to the RuvC family. Homodimer which binds Holliday junction (HJ) DNA. The HJ becomes 2-fold symmetrical on binding to RuvC with unstacked arms; it has a different conformation from HJ DNA in complex with RuvA. In the full resolvosome a probable DNA-RuvA(4)-RuvB(12)-RuvC(2) complex forms which resolves the HJ. It depends on Mg(2+) as a cofactor.

It is found in the cytoplasm. The catalysed reaction is Endonucleolytic cleavage at a junction such as a reciprocal single-stranded crossover between two homologous DNA duplexes (Holliday junction).. Its function is as follows. The RuvA-RuvB-RuvC complex processes Holliday junction (HJ) DNA during genetic recombination and DNA repair. Endonuclease that resolves HJ intermediates. Cleaves cruciform DNA by making single-stranded nicks across the HJ at symmetrical positions within the homologous arms, yielding a 5'-phosphate and a 3'-hydroxyl group; requires a central core of homology in the junction. The consensus cleavage sequence is 5'-(A/T)TT(C/G)-3'. Cleavage occurs on the 3'-side of the TT dinucleotide at the point of strand exchange. HJ branch migration catalyzed by RuvA-RuvB allows RuvC to scan DNA until it finds its consensus sequence, where it cleaves and resolves the cruciform DNA. This Pectobacterium carotovorum subsp. carotovorum (strain PC1) protein is Crossover junction endodeoxyribonuclease RuvC.